The primary structure comprises 719 residues: Putative RNA-binding protein involved in heterochromatin assembly (719 aa).

Positions 226-322 (KILYMNNLPP…NLANTKQPRV (97 aa)) constitute an RRM domain. Serine 345 carries the phosphoserine modification. The RanBP2-type 1 zinc finger occupies 355-384 (RPGDWNCPSCGFSNFQRRTACFRCSFPAPS). The tract at residues 389–415 (HTANSNNNVNSSRNNLNNRVNSGSSSN) is disordered. The segment covering 392-415 (NSNNNVNSSRNNLNNRVNSGSSSN) has biased composition (low complexity). A Phosphoserine modification is found at serine 455. The segment at 511–561 (NNNINGNGNGNGNNSNNNNNHNNNHNNNHHNGSINSNSNTNNNNNNNNGNN) is disordered. The RanBP2-type 2 zinc finger occupies 581 to 610 (RAGDWKCSTCTYHNFAKNVVCLRCGGPKSI). Residues 622 to 649 (DSSTFGPASRTPSNNNISVNTNGGSNAG) show a composition bias toward polar residues. A disordered region spans residues 622–661 (DSSTFGPASRTPSNNNISVNTNGGSNAGRTDGNDNKGRDI). Position 630 is a phosphoserine (serine 630). The span at 652 to 661 (DGNDNKGRDI) shows a compositional bias: basic and acidic residues.

Its subcellular location is the chromosome. It localises to the nucleus. May play a role in chromatin organization. This Saccharomyces cerevisiae (strain ATCC 204508 / S288c) (Baker's yeast) protein is Putative RNA-binding protein involved in heterochromatin assembly.